The primary structure comprises 554 residues: DNA ligase (554 aa).

Glutamate 253 lines the ATP pocket. The active-site N6-AMP-lysine intermediate is lysine 255. ATP-binding residues include arginine 260, arginine 275, glutamate 304, phenylalanine 344, arginine 418, and lysine 424.

It belongs to the ATP-dependent DNA ligase family. The cofactor is Mg(2+).

The enzyme catalyses ATP + (deoxyribonucleotide)n-3'-hydroxyl + 5'-phospho-(deoxyribonucleotide)m = (deoxyribonucleotide)n+m + AMP + diphosphate.. In terms of biological role, DNA ligase that seals nicks in double-stranded DNA during DNA replication, DNA recombination and DNA repair. The chain is DNA ligase from Haloarcula marismortui (strain ATCC 43049 / DSM 3752 / JCM 8966 / VKM B-1809) (Halobacterium marismortui).